The chain runs to 819 residues: Hypoxia-inducible factor 1-alpha (819 aa).

Residues 1–31 (MEGAAGGEEKKNRMSSERRKEKSRDAARSRR) form a disordered region. The interval 1-402 (MEGAAGGEEK…KEPDALTLLA (402 aa)) is interaction with TSGA10. Basic and acidic residues predominate over residues 7–31 (GEEKKNRMSSERRKEKSRDAARSRR). In terms of domain architecture, bHLH spans 18–71 (RRKEKSRDAARSRRSKESEVFYELAHQLPLPHNVSSHLDKASVMRLTISYLRVR). Residues 22–31 (KSRDAARSRR) form a DNA-binding region. A PAS 1 domain is found at 86-159 (KAQMNCFYLK…THRNGPIKKG (74 aa)). Residues 171 to 192 (RMKCTLTSRGRTMNIKSATWKV) form a required for heterodimer formation with ARNT region. The region spanning 229 to 299 (PHPSNIEIPL…KTHHDMFTKG (71 aa)) is the PAS 2 domain. At Ser-248 the chain carries Phosphoserine; by CK1. In terms of domain architecture, PAC spans 303-346 (TGQYRMLAKRGGYVWVETQATVIYNTKNSQPQCIVCVNYVVSGI). Residues 402-599 (APAAGDTIIS…NPPSVSTAFQ (198 aa)) are ODD. Pro-403 carries the 4-hydroxyproline modification. Positions 495–518 (IQDQPASPSDGSTRQSSPEPNSPS) are enriched in polar residues. Residues 495 to 521 (IQDQPASPSDGSTRQSSPEPNSPSEYC) are disordered. The tract at residues 532 to 576 (FKLELVEKLFAEDTEAKNPFSTQDTDLDLEMLAPYIPMDDDFQLR) is NTAD. At Lys-533 the chain carries N6-acetyllysine; alternate. Lys-533 participates in a covalent cross-link: Glycyl lysine isopeptide (Lys-Gly) (interchain with G-Cter in ubiquitin); alternate. Glycyl lysine isopeptide (Lys-Gly) (interchain with G-Cter in ubiquitin) cross-links involve residues Lys-539 and Lys-548. A Phosphoserine; by GSK3-beta modification is found at Ser-552. Position 556 is a phosphothreonine; by GSK3-beta (Thr-556). The residue at position 565 (Pro-565) is a 4-hydroxyproline. Ser-577 carries the phosphoserine; by PLK3 modification. Positions 577 to 778 (SFDQLSPLES…SDLACRLLGQ (202 aa)) are ID. The segment at 581-685 (LSPLESSSPN…SHPRSPNVLS (105 aa)) is disordered. Low complexity predominate over residues 582–613 (SPLESSSPNPPSVSTAFQQTQLQEPTITTTTT). A compositionally biased stretch (basic and acidic residues) spans 614 to 628 (EELKTVTKDSTEDIK). Positions 632–655 (TSPSSTHTPKETTTATTSSPYSGT) are enriched in low complexity. The residue at position 650 (Ser-650) is a Phosphoserine; by PLK3. The residue at position 702 (Lys-702) is an N6-acetyllysine. Positions 711–717 (RKRKMEH) match the Nuclear localization signal motif. Residues 779–819 (SMDGSGLPQLTSYDCEVNAPIQGSRNLLQGEELLRALDQVN) are CTAD. Cys-793 is subject to S-nitrosocysteine. Asn-796 carries the post-translational modification (3S)-3-hydroxyasparagine.

As to quaternary structure, interacts with the ARNT; forms a heterodimer that binds core DNA sequence 5'-TACGTG-3' within the hypoxia response element (HRE) of target gene promoters. Interacts with COPS5; the interaction increases the transcriptional activity of HIF1A through increased stability. Interacts with EP300 (via TAZ-type 1 domains); the interaction is stimulated in response to hypoxia and inhibited by CITED2. Interacts with CREBBP (via TAZ-type 1 domains). Interacts with NCOA1, NCOA2, APEX1 and HSP90. Interacts (hydroxylated within the ODD domain) with VHLL (via beta domain); the interaction, leads to polyubiquitination and subsequent HIF1A proteasomal degradation. During hypoxia, sumoylated HIF1A also binds VHL; the interaction promotes the ubiquitination of HIF1A. Interacts with SENP1; the interaction desumoylates HIF1A resulting in stabilization and activation of transcription. Interacts (via the ODD domain) with NAA10; the interaction appears not to acetylate HIF1A nor have any affect on protein stability, during hypoxia. Interacts with RWDD3; the interaction enhances HIF1A sumoylation. Interacts with TSGA10. Interacts with HIF3A. Interacts with RORA (via the DNA binding domain); the interaction enhances HIF1A transcription under hypoxia through increasing protein stability. Interaction with PSMA7 inhibits the transactivation activity of HIF1A under both normoxic and hypoxia-mimicking conditions. Interacts with USP20. Interacts with RACK1; promotes HIF1A ubiquitination and proteasome-mediated degradation. Interacts (via N-terminus) with USP19. Interacts with SIRT2. Interacts (deacetylated form) with EGLN1. Interacts with CBFA2T3. Interacts with HSP90AA1 and HSP90AB1. Interacts with DCUN1D1; this interaction increases the interaction between VHL and DCUN1D1. Interacts with HIF1AN. In terms of processing, S-nitrosylation of Cys-793 may be responsible for increased recruitment of p300 coactivator necessary for transcriptional activity of HIF-1 complex. Post-translationally, acetylation of Lys-533 by ARD1 increases interaction with VHL and stimulates subsequent proteasomal degradation. Deacetylation of Lys-702 by SIRT2 increases its interaction with and hydroxylation by EGLN1 thereby inactivating HIF1A activity by inducing its proteasomal degradation. Requires phosphorylation for DNA-binding. Phosphorylation at Ser-248 by CSNK1D/CK1 represses kinase activity and impairs ARNT binding. Phosphorylation by GSK3-beta and PLK3 promote degradation by the proteasome. In terms of processing, the iron and 2-oxoglutarate dependent 3-hydroxylation of asparagine is (S) stereospecific within HIF CTAD domains. Post-translationally, sumoylated; with SUMO1 under hypoxia. Sumoylation is enhanced through interaction with RWDD3. Both sumoylation and desumoylation seem to be involved in the regulation of its stability during hypoxia. Sumoylation can promote either its stabilization or its VHL-dependent degradation by promoting hydroxyproline-independent HIF1A-VHL complex binding, thus leading to HIF1A ubiquitination and proteasomal degradation. Desumoylation by SENP1 increases its stability amd transcriptional activity. There is a disaccord between various publications on the effect of sumoylation and desumoylation on its stability and transcriptional activity. In normoxia, is hydroxylated on Pro-403 and Pro-565 in the oxygen-dependent degradation domain (ODD) by EGLN1/PHD2 and EGLN2/PHD1. EGLN3/PHD3 has also been shown to hydroxylate Pro-565. The hydroxylated prolines promote interaction with VHL, initiating rapid ubiquitination and subsequent proteasomal degradation. Deubiquitinated by USP20. Under hypoxia, proline hydroxylation is impaired and ubiquitination is attenuated, resulting in stabilization. In normoxia, is hydroxylated on Asn-796 by HIF1AN, thus abrogating interaction with CREBBP and EP300 and preventing transcriptional activation. Repressed by iron ion, via Fe(2+) prolyl hydroxylase (PHD) enzymes-mediated hydroxylation and subsequent proteasomal degradation.

The protein resides in the cytoplasm. It is found in the nucleus. The protein localises to the nucleus speckle. Induced by reactive oxygen species (ROS). Functionally, functions as a master transcriptional regulator of the adaptive response to hypoxia. Under hypoxic conditions, activates the transcription of over 40 genes, including erythropoietin, glucose transporters, glycolytic enzymes, vascular endothelial growth factor, HILPDA, and other genes whose protein products increase oxygen delivery or facilitate metabolic adaptation to hypoxia. Plays an essential role in embryonic vascularization, tumor angiogenesis and pathophysiology of ischemic disease. Heterodimerizes with ARNT; heterodimer binds to core DNA sequence 5'-TACGTG-3' within the hypoxia response element (HRE) of target gene promoters. Activation requires recruitment of transcriptional coactivators such as CREBBP and EP300. Activity is enhanced by interaction with NCOA1 and/or NCOA2. Interaction with redox regulatory protein APEX1 seems to activate CTAD and potentiates activation by NCOA1 and CREBBP. Involved in the axonal distribution and transport of mitochondria in neurons during hypoxia. In Eospalax fontanierii baileyi (Plateau zokor), this protein is Hypoxia-inducible factor 1-alpha (HIF1A).